A 335-amino-acid chain; its full sequence is Fructose-1,6-bisphosphatase class 1 (335 aa).

Mg(2+)-binding residues include glutamate 92, aspartate 114, leucine 116, and aspartate 117. Residues 117–120 (DGSS), asparagine 209, and lysine 275 contribute to the substrate site. Residue glutamate 281 participates in Mg(2+) binding.

This sequence belongs to the FBPase class 1 family. As to quaternary structure, homotetramer. Mg(2+) is required as a cofactor.

Its subcellular location is the cytoplasm. It catalyses the reaction beta-D-fructose 1,6-bisphosphate + H2O = beta-D-fructose 6-phosphate + phosphate. It functions in the pathway carbohydrate biosynthesis; gluconeogenesis. This Verminephrobacter eiseniae (strain EF01-2) protein is Fructose-1,6-bisphosphatase class 1.